We begin with the raw amino-acid sequence, 711 residues long: MND1-interacting protein 1 (711 aa).

Residues 390–648 (EWAQKNAMQA…LEGSYDNEAN (259 aa)) are a coiled coil. Disordered stretches follow at residues 552–571 (EALA…EGHN) and 602–622 (RLKA…WKPK). The segment covering 602 to 611 (RLKASSDSDS) has biased composition (basic and acidic residues). The RING-type zinc finger occupies 653 to 697 (CIICMKDEVSVVFLPCAHQVVCGSCSDSFFASNNGGSKVTCPCCR).

As to quaternary structure, interacts (via C-terminal domain) with MND1 and HOP2. Interacts with XRI1 (via C-terminal domain).

This is MND1-interacting protein 1 (MIP1) from Arabidopsis thaliana (Mouse-ear cress).